Here is a 121-residue protein sequence, read N- to C-terminus: Ribosome-binding factor A (121 aa).

The protein belongs to the RbfA family. Monomer. Binds 30S ribosomal subunits, but not 50S ribosomal subunits or 70S ribosomes.

The protein resides in the cytoplasm. Functionally, one of several proteins that assist in the late maturation steps of the functional core of the 30S ribosomal subunit. Associates with free 30S ribosomal subunits (but not with 30S subunits that are part of 70S ribosomes or polysomes). Required for efficient processing of 16S rRNA. May interact with the 5'-terminal helix region of 16S rRNA. The chain is Ribosome-binding factor A from Finegoldia magna (strain ATCC 29328 / DSM 20472 / WAL 2508) (Peptostreptococcus magnus).